The chain runs to 131 residues: UPF0102 protein H16_A3579 (131 aa).

This sequence belongs to the UPF0102 family.

This Cupriavidus necator (strain ATCC 17699 / DSM 428 / KCTC 22496 / NCIMB 10442 / H16 / Stanier 337) (Ralstonia eutropha) protein is UPF0102 protein H16_A3579.